We begin with the raw amino-acid sequence, 481 residues long: Chromosomal replication initiator protein DnaA (481 aa).

The tract at residues 1-74 is domain I, interacts with DnaA modulators; the sequence is MSQDLWSFCL…ELGAEFHGAP (74 aa). The domain II stretch occupies residues 74–144; the sequence is PIEIELVLPA…TASDLAYEKT (71 aa). The interval 101–123 is disordered; it reads AGPAPAPTPSQAPAATAAAPAVV. Low complexity predominate over residues 111-123; that stretch reads QAPAATAAAPAVV. Residues 145–361 form a domain III, AAA+ region region; the sequence is RLNADFTFDT…GALNKVVAFA (217 aa). Residues Gly-189, Gly-191, Lys-192, and Thr-193 each contribute to the ATP site. The interval 362–481 is domain IV, binds dsDNA; that stretch reads RFHGRGITLE…VHVLTQVLRG (120 aa).

Belongs to the DnaA family. In terms of assembly, oligomerizes as a right-handed, spiral filament on DNA at oriC.

The protein resides in the cytoplasm. Functionally, plays an essential role in the initiation and regulation of chromosomal replication. ATP-DnaA binds to the origin of replication (oriC) to initiate formation of the DNA replication initiation complex once per cell cycle. Binds the DnaA box (a 9 base pair repeat at the origin) and separates the double-stranded (ds)DNA. Forms a right-handed helical filament on oriC DNA; dsDNA binds to the exterior of the filament while single-stranded (ss)DNA is stabiized in the filament's interior. The ATP-DnaA-oriC complex binds and stabilizes one strand of the AT-rich DNA unwinding element (DUE), permitting loading of DNA polymerase. After initiation quickly degrades to an ADP-DnaA complex that is not apt for DNA replication. Binds acidic phospholipids. This is Chromosomal replication initiator protein DnaA from Aromatoleum aromaticum (strain DSM 19018 / LMG 30748 / EbN1) (Azoarcus sp. (strain EbN1)).